The following is a 334-amino-acid chain: Glyceraldehyde-3-phosphate dehydrogenase (334 aa).

Residues 12 to 13 (TI) and Gly-111 contribute to the NAD(+) site. 140–142 (SCN) is a D-glyceraldehyde 3-phosphate binding site. Cys-141 serves as the catalytic Nucleophile. Arg-167 provides a ligand contact to NAD(+). D-glyceraldehyde 3-phosphate is bound at residue 192–193 (HG). Gln-298 provides a ligand contact to NAD(+).

The protein belongs to the glyceraldehyde-3-phosphate dehydrogenase family. Homotetramer.

It is found in the cytoplasm. It catalyses the reaction D-glyceraldehyde 3-phosphate + phosphate + NADP(+) = (2R)-3-phospho-glyceroyl phosphate + NADPH + H(+). The enzyme catalyses D-glyceraldehyde 3-phosphate + phosphate + NAD(+) = (2R)-3-phospho-glyceroyl phosphate + NADH + H(+). Its pathway is carbohydrate degradation; glycolysis; pyruvate from D-glyceraldehyde 3-phosphate: step 1/5. In Thermococcus sibiricus (strain DSM 12597 / MM 739), this protein is Glyceraldehyde-3-phosphate dehydrogenase.